A 467-amino-acid polypeptide reads, in one-letter code: Asparagine--tRNA ligase (467 aa).

Belongs to the class-II aminoacyl-tRNA synthetase family. Homodimer.

It is found in the cytoplasm. It catalyses the reaction tRNA(Asn) + L-asparagine + ATP = L-asparaginyl-tRNA(Asn) + AMP + diphosphate + H(+). In Legionella pneumophila (strain Paris), this protein is Asparagine--tRNA ligase.